The primary structure comprises 211 residues: Small ribosomal subunit protein eS8 (211 aa).

The protein belongs to the eukaryotic ribosomal protein eS8 family.

The protein is Small ribosomal subunit protein eS8 (rps8) of Dictyostelium discoideum (Social amoeba).